The following is a 339-amino-acid chain: D-alanine--D-alanine ligase (339 aa).

Positions 115–327 (KHIFRSLGID…FNELVKIIIE (213 aa)) constitute an ATP-grasp domain. Residue 142-211 (KIDYPYVLKP…EEYIPGIELH (70 aa)) coordinates ATP. Mg(2+)-binding residues include D279, E293, and N295.

Belongs to the D-alanine--D-alanine ligase family. Requires Mg(2+) as cofactor. The cofactor is Mn(2+).

Its subcellular location is the cytoplasm. It carries out the reaction 2 D-alanine + ATP = D-alanyl-D-alanine + ADP + phosphate + H(+). It functions in the pathway cell wall biogenesis; peptidoglycan biosynthesis. Cell wall formation. The sequence is that of D-alanine--D-alanine ligase from Wolbachia sp. subsp. Brugia malayi (strain TRS).